Here is a 164-residue protein sequence, read N- to C-terminus: Peptide methionine sulfoxide reductase MsrA (164 aa).

Residue Cys-16 is part of the active site.

Belongs to the MsrA Met sulfoxide reductase family.

The catalysed reaction is L-methionyl-[protein] + [thioredoxin]-disulfide + H2O = L-methionyl-(S)-S-oxide-[protein] + [thioredoxin]-dithiol. It catalyses the reaction [thioredoxin]-disulfide + L-methionine + H2O = L-methionine (S)-S-oxide + [thioredoxin]-dithiol. Its function is as follows. Has an important function as a repair enzyme for proteins that have been inactivated by oxidation. Catalyzes the reversible oxidation-reduction of methionine sulfoxide in proteins to methionine. The protein is Peptide methionine sulfoxide reductase MsrA of Clostridium tetani (strain Massachusetts / E88).